We begin with the raw amino-acid sequence, 513 residues long: Putative BTB/POZ domain-containing protein L55 (513 aa).

The 73-residue stretch at 11–83 folds into the BTB domain; sequence SPIKIILQDI…FHGYKMEISD (73 aa).

This sequence belongs to the mimivirus BTB/WD family.

The protein is Putative BTB/POZ domain-containing protein L55 of Acanthamoeba polyphaga (Amoeba).